Here is a 155-residue protein sequence, read N- to C-terminus: 3-hydroxyacyl-[acyl-carrier-protein] dehydratase FabZ (155 aa).

His-59 is an active-site residue.

Belongs to the thioester dehydratase family. FabZ subfamily.

The protein localises to the cytoplasm. The enzyme catalyses a (3R)-hydroxyacyl-[ACP] = a (2E)-enoyl-[ACP] + H2O. Its function is as follows. Involved in unsaturated fatty acids biosynthesis. Catalyzes the dehydration of short chain beta-hydroxyacyl-ACPs and long chain saturated and unsaturated beta-hydroxyacyl-ACPs. This chain is 3-hydroxyacyl-[acyl-carrier-protein] dehydratase FabZ, found in Bartonella quintana (strain Toulouse) (Rochalimaea quintana).